A 527-amino-acid polypeptide reads, in one-letter code: ATP synthase subunit alpha (527 aa).

Residue 177–184 participates in ATP binding; it reads GDRQTGKT.

Belongs to the ATPase alpha/beta chains family. As to quaternary structure, F-type ATPases have 2 components, CF(1) - the catalytic core - and CF(0) - the membrane proton channel. CF(1) has five subunits: alpha(3), beta(3), gamma(1), delta(1), epsilon(1). CF(0) has four main subunits: a(1), b(1), b'(1) and c(9-12).

It is found in the cell membrane. It carries out the reaction ATP + H2O + 4 H(+)(in) = ADP + phosphate + 5 H(+)(out). In terms of biological role, produces ATP from ADP in the presence of a proton gradient across the membrane. The alpha chain is a regulatory subunit. This chain is ATP synthase subunit alpha, found in Roseiflexus sp. (strain RS-1).